A 1445-amino-acid chain; its full sequence is Netrin receptor DCC (1445 aa).

The signal sequence occupies residues 1 to 25 (MENSLGCVWVPKLAFVLFGASLLSA). Ig-like C2-type domains follow at residues 26 to 135 (HLQV…AKVM), 139 to 229 (PLRF…AEVR), 234 to 326 (PGLH…AELT), and 331 to 416 (PWFL…AQLI). N60 and N94 each carry an N-linked (GlcNAc...) asparagine glycan. Disulfide bonds link C61-C117, C161-C212, and C261-C310. Residues N299 and N318 are each glycosylated (N-linked (GlcNAc...) asparagine). The cysteines at positions 352 and 400 are disulfide-linked. 6 Fibronectin type-III domains span residues 431–524 (APRD…TQPE), 530–620 (PVEN…TLSD), 625–718 (PPQN…TPEN), 728–821 (QPSS…TDPT), 846–942 (PPVG…TYEA), and 947–1044 (APKD…TLKV). N-linked (GlcNAc...) asparagine glycosylation is present at N478. Residues N628 and N702 are each glycosylated (N-linked (GlcNAc...) asparagine). A helical membrane pass occupies residues 1100-1120 (VITVVTVGVLTVLVVVIVAVI). Disordered regions lie at residues 1126–1152 (SAQQ…RPPD) and 1167–1220 (KPAG…MSTL). The segment covering 1129–1143 (QRKKRATHSASKRKG) has biased composition (basic residues). S1178 is modified (phosphoserine; by MAPK1). Residues 1179–1220 (PIQSCQDLTPVSHSQSESQMGSKSASHSGQDTEEAGSSMSTL) are compositionally biased toward polar residues. Position 1187 is a phosphothreonine; by MAPK1 (T1187). A Phosphoserine; by MAPK1 modification is found at S1267. 2 disordered regions span residues 1292–1327 (GFGA…APSR) and 1392–1417 (LLPV…PASV).

Belongs to the immunoglobulin superfamily. DCC family. In terms of assembly, interacts with the cytoplasmic part of UNC5A, UNC5B and UNC5C. Interacts with DSCAM. Interacts with PTK2/FAK1. Interacts with MYO10. Interacts with MAPK1. Interacts with NTN1. Interacts with CBLN4; this interaction can be competed by NTN1. Interacts with SIAH1 and SIAH2. Ubiquitinated; mediated by SIAH1 or SIAH2 and leading to its subsequent proteasomal degradation. Detected in embryonic spinal cord, predominantly in axons of commissural neurons (at protein level). Detected in embryonic spinal cord.

The protein localises to the membrane. Its function is as follows. Receptor for netrin required for axon guidance. Mediates axon attraction of neuronal growth cones in the developing nervous system upon ligand binding. Its association with UNC5 proteins may trigger signaling for axon repulsion. It also acts as a dependence receptor required for apoptosis induction when not associated with netrin ligand. Implicated as a tumor suppressor gene. This Rattus norvegicus (Rat) protein is Netrin receptor DCC (Dcc).